A 399-amino-acid polypeptide reads, in one-letter code: Imidazolonepropionase (399 aa).

The Fe(3+) site is built by H74 and H76. Residues H74 and H76 each coordinate Zn(2+). 4-imidazolone-5-propanoate contacts are provided by R83, Y146, and H176. Residue Y146 coordinates N-formimidoyl-L-glutamate. H238 contacts Fe(3+). Residue H238 participates in Zn(2+) binding. Q241 contributes to the 4-imidazolone-5-propanoate binding site. Position 312 (D312) interacts with Fe(3+). D312 is a binding site for Zn(2+). The N-formimidoyl-L-glutamate site is built by N314 and G316. S317 provides a ligand contact to 4-imidazolone-5-propanoate.

It belongs to the metallo-dependent hydrolases superfamily. HutI family. Zn(2+) is required as a cofactor. It depends on Fe(3+) as a cofactor.

The protein resides in the cytoplasm. It carries out the reaction 4-imidazolone-5-propanoate + H2O = N-formimidoyl-L-glutamate. It participates in amino-acid degradation; L-histidine degradation into L-glutamate; N-formimidoyl-L-glutamate from L-histidine: step 3/3. Functionally, catalyzes the hydrolytic cleavage of the carbon-nitrogen bond in imidazolone-5-propanoate to yield N-formimidoyl-L-glutamate. It is the third step in the universal histidine degradation pathway. The polypeptide is Imidazolonepropionase (Deinococcus deserti (strain DSM 17065 / CIP 109153 / LMG 22923 / VCD115)).